The primary structure comprises 1637 residues: Glutamate rich 3 (1637 aa).

Disordered regions lie at residues 145 to 192 (PLTL…GSLL), 408 to 453 (PSST…KESC), 478 to 814 (EWKG…QDAG), 1111 to 1194 (VGTS…SPRE), 1238 to 1445 (IEKV…SGER), and 1457 to 1637 (KAEN…RETA). Polar residues predominate over residues 169–185 (LLSSRQTRNGSKITSGS). Composition is skewed to basic and acidic residues over residues 416-426 (EKITEKKEEPP), 443-452 (KRNEMERKES), and 478-487 (EWKGKSGRDV). Residues 500-523 (YEEDFEVDDEKQDEKVDEDEDQAD) show a composition bias toward acidic residues. The segment covering 534-557 (TESEKDNRNPEKKIETSSEKAHDS) has biased composition (basic and acidic residues). The segment covering 558–572 (ENEDTGCSDSEEDDR) has biased composition (acidic residues). 2 stretches are compositionally biased toward low complexity: residues 579–590 (SSISSRSHPYSS) and 608–617 (EEGSSRSSSS). Basic and acidic residues-rich tracts occupy residues 619 to 638 (DLRENDDPGKPHFPIEKYLE), 677 to 693 (ESEHKEPRRVASSEVRA), 769 to 802 (QEMHTLKEEAMKKDESSQPEDTDAHAGVREESGM), 1115 to 1130 (EVKEAEREVGSPKTDG), 1264 to 1307 (LKTE…KDVE), 1319 to 1329 (KLLEDPPKERA), 1342 to 1357 (SPKESEATATEHKGGE), and 1402 to 1412 (RCEEWAAKELD). The segment covering 1476–1487 (VTGSLTGQNWNM) has biased composition (polar residues). Composition is skewed to basic and acidic residues over residues 1550 to 1568 (AEERTGTEDMAPRTEKVAV), 1589 to 1599 (AQDREGGETKA), and 1614 to 1637 (GKDEEHQSGAAEEFRESVSQRETA).

Its subcellular location is the cell projection. It is found in the cilium. The protein localises to the cytoplasm. In terms of biological role, component of the primary cilium that controls cilium formation and length. May function within retrograde intraflagellar transport (IFT)-associated pathways to remove signaling proteins from primary cilia. Also involved in neuronal vesicle biogenesis and neurotransmitter vesicular function. The chain is Glutamate rich 3 from Mus musculus (Mouse).